Here is a 121-residue protein sequence, read N- to C-terminus: Small ribosomal subunit protein uS13 (121 aa).

The segment at 94–121 (GLPVRGQNTKNNARTRKGKAVAIAGKKK) is disordered. Over residues 106 to 121 (ARTRKGKAVAIAGKKK) the composition is skewed to basic residues.

This sequence belongs to the universal ribosomal protein uS13 family. As to quaternary structure, part of the 30S ribosomal subunit. Forms a loose heterodimer with protein S19. Forms two bridges to the 50S subunit in the 70S ribosome.

In terms of biological role, located at the top of the head of the 30S subunit, it contacts several helices of the 16S rRNA. In the 70S ribosome it contacts the 23S rRNA (bridge B1a) and protein L5 of the 50S subunit (bridge B1b), connecting the 2 subunits; these bridges are implicated in subunit movement. Contacts the tRNAs in the A and P-sites. The polypeptide is Small ribosomal subunit protein uS13 (Streptococcus sanguinis (strain SK36)).